A 501-amino-acid polypeptide reads, in one-letter code: Glycerol kinase (501 aa).

An ADP-binding site is contributed by T12. ATP is bound by residues T12, T13, and S14. T12 lines the sn-glycerol 3-phosphate pocket. R16 lines the ADP pocket. Sn-glycerol 3-phosphate is bound by residues R82, E83, Y134, and D244. The glycerol site is built by R82, E83, Y134, D244, and Q245. ADP contacts are provided by T266 and G310. Residues T266, G310, Q314, and G411 each contribute to the ATP site. Residues G411 and N415 each coordinate ADP.

This sequence belongs to the FGGY kinase family.

The catalysed reaction is glycerol + ATP = sn-glycerol 3-phosphate + ADP + H(+). Its pathway is polyol metabolism; glycerol degradation via glycerol kinase pathway; sn-glycerol 3-phosphate from glycerol: step 1/1. With respect to regulation, inhibited by fructose 1,6-bisphosphate (FBP). Its function is as follows. Key enzyme in the regulation of glycerol uptake and metabolism. Catalyzes the phosphorylation of glycerol to yield sn-glycerol 3-phosphate. This chain is Glycerol kinase, found in Methylorubrum populi (strain ATCC BAA-705 / NCIMB 13946 / BJ001) (Methylobacterium populi).